The following is a 350-amino-acid chain: Small ribosomal subunit biogenesis GTPase RsgA (350 aa).

The span at 1–17 (MSKNKLSKGQQRRVNAN) shows a compositional bias: polar residues. The interval 1-33 (MSKNKLSKGQQRRVNANHQRRLKTSKEKPDYDD) is disordered. In terms of domain architecture, CP-type G spans 104–273 (TSVLTRPDFY…VIDSPGVREF (170 aa)). GTP-binding positions include 160-163 (NKID) and 214-222 (GQSGVGKSS). Zn(2+)-binding residues include Cys297, Cys302, His304, and Cys310.

The protein belongs to the TRAFAC class YlqF/YawG GTPase family. RsgA subfamily. Monomer. Associates with 30S ribosomal subunit, binds 16S rRNA. Requires Zn(2+) as cofactor.

It is found in the cytoplasm. Its function is as follows. One of several proteins that assist in the late maturation steps of the functional core of the 30S ribosomal subunit. Helps release RbfA from mature subunits. May play a role in the assembly of ribosomal proteins into the subunit. Circularly permuted GTPase that catalyzes slow GTP hydrolysis, GTPase activity is stimulated by the 30S ribosomal subunit. The protein is Small ribosomal subunit biogenesis GTPase RsgA of Escherichia coli O6:H1 (strain CFT073 / ATCC 700928 / UPEC).